Here is a 108-residue protein sequence, read N- to C-terminus: UPF0102 protein Sama_3355 (108 aa).

It belongs to the UPF0102 family.

The chain is UPF0102 protein Sama_3355 from Shewanella amazonensis (strain ATCC BAA-1098 / SB2B).